A 564-amino-acid polypeptide reads, in one-letter code: Adenine deaminase (564 aa).

This sequence belongs to the metallo-dependent hydrolases superfamily. Adenine deaminase family. Mn(2+) serves as cofactor.

It carries out the reaction adenine + H2O + H(+) = hypoxanthine + NH4(+). This is Adenine deaminase from Deinococcus geothermalis (strain DSM 11300 / CIP 105573 / AG-3a).